The chain runs to 199 residues: Octanoyltransferase (199 aa).

The region spanning 27–199 (SNSCDELWLL…FVQYFLTQFK (173 aa)) is the BPL/LPL catalytic domain. Substrate is bound by residues 66-73 (RGGQVTYH), 133-135 (SIG), and 146-148 (GIA). The Acyl-thioester intermediate role is filled by C164.

Belongs to the LipB family.

It localises to the cytoplasm. It carries out the reaction octanoyl-[ACP] + L-lysyl-[protein] = N(6)-octanoyl-L-lysyl-[protein] + holo-[ACP] + H(+). It participates in protein modification; protein lipoylation via endogenous pathway; protein N(6)-(lipoyl)lysine from octanoyl-[acyl-carrier-protein]: step 1/2. In terms of biological role, catalyzes the transfer of endogenously produced octanoic acid from octanoyl-acyl-carrier-protein onto the lipoyl domains of lipoate-dependent enzymes. Lipoyl-ACP can also act as a substrate although octanoyl-ACP is likely to be the physiological substrate. The sequence is that of Octanoyltransferase from Legionella pneumophila (strain Corby).